The following is a 137-amino-acid chain: MPTINQLVRKPRQSKSKKSDSPVLNRGFNSKKKQFTNLNSPQKRGVCTRVGTMTPRKPNSALRKYARVRLSNNIEINAYIPGIGHNLQEHSVVLVRGGRVKDLPGVRYHIVRGALDTSGVDGRRQGRSLYGTKKPKN.

The segment at 1-57 (MPTINQLVRKPRQSKSKKSDSPVLNRGFNSKKKQFTNLNSPQKRGVCTRVGTMTPRK) is disordered. 3-methylthioaspartic acid is present on Asp-102. Positions 118-137 (SGVDGRRQGRSLYGTKKPKN) are disordered.

This sequence belongs to the universal ribosomal protein uS12 family. In terms of assembly, part of the 30S ribosomal subunit. Contacts proteins S8 and S17. May interact with IF1 in the 30S initiation complex.

With S4 and S5 plays an important role in translational accuracy. Functionally, interacts with and stabilizes bases of the 16S rRNA that are involved in tRNA selection in the A site and with the mRNA backbone. Located at the interface of the 30S and 50S subunits, it traverses the body of the 30S subunit contacting proteins on the other side and probably holding the rRNA structure together. The combined cluster of proteins S8, S12 and S17 appears to hold together the shoulder and platform of the 30S subunit. In Staphylococcus haemolyticus (strain JCSC1435), this protein is Small ribosomal subunit protein uS12.